Reading from the N-terminus, the 132-residue chain is Intraflagellar transport protein 20 homolog B (132 aa).

A coiled-coil region spans residues 87-112 (EAQQQQLYALIAEKKMQLERYRIEYD).

It localises to the golgi apparatus. It is found in the cis-Golgi network. Its subcellular location is the cytoplasm. The protein resides in the cytoskeleton. The protein localises to the microtubule organizing center. It localises to the centrosome. It is found in the centriole. Its subcellular location is the cell projection. The protein resides in the cilium. Functionally, involved in ciliary process assembly. May play a role in the trafficking of ciliary membrane proteins from the Golgi complex to the cilium. Regulates the platelet-derived growth factor receptor-alpha (PDGFRA) signaling pathway. Plays an important role in spermatogenesis, particularly spermiogenesis, when germ cells form flagella. The sequence is that of Intraflagellar transport protein 20 homolog B (ift20-b) from Xenopus laevis (African clawed frog).